A 595-amino-acid chain; its full sequence is Glutamyl-tRNA(Gln) amidotransferase subunit B, mitochondrial (595 aa).

A mitochondrion-targeting transit peptide spans 1–72; the sequence is MPRLWYSRYL…RAKSQSRNGR (72 aa).

Belongs to the GatB/GatE family. GatB subfamily. As to quaternary structure, subunit of the heterotrimeric GatCAB amidotransferase (AdT) complex, composed of A, B and C subunits.

The protein resides in the mitochondrion. It carries out the reaction L-glutamyl-tRNA(Gln) + L-glutamine + ATP + H2O = L-glutaminyl-tRNA(Gln) + L-glutamate + ADP + phosphate + H(+). Functionally, allows the formation of correctly charged Gln-tRNA(Gln) through the transamidation of misacylated Glu-tRNA(Gln) in the mitochondria. The reaction takes place in the presence of glutamine and ATP through an activated gamma-phospho-Glu-tRNA(Gln). This is Glutamyl-tRNA(Gln) amidotransferase subunit B, mitochondrial from Talaromyces marneffei (strain ATCC 18224 / CBS 334.59 / QM 7333) (Penicillium marneffei).